We begin with the raw amino-acid sequence, 215 residues long: RNA pyrophosphohydrolase (215 aa).

The 144-residue stretch at 6–149 (GFRPNVGIIL…KRDVYQLALT (144 aa)) folds into the Nudix hydrolase domain. The Nudix box signature appears at 38–59 (GGIKYGETPMQAMYRELHEETG).

It belongs to the Nudix hydrolase family. RppH subfamily. A divalent metal cation serves as cofactor.

Functionally, accelerates the degradation of transcripts by removing pyrophosphate from the 5'-end of triphosphorylated RNA, leading to a more labile monophosphorylated state that can stimulate subsequent ribonuclease cleavage. This chain is RNA pyrophosphohydrolase, found in Burkholderia vietnamiensis (strain G4 / LMG 22486) (Burkholderia cepacia (strain R1808)).